The primary structure comprises 582 residues: tRNA-guanine(15) transglycosylase (582 aa).

The Nucleophile role is filled by aspartate 95. Substrate-binding residues include aspartate 130 and glycine 196. Residues cysteine 279, cysteine 281, and cysteine 284 each contribute to the Zn(2+) site. One can recognise a PUA domain in the interval 507-582; sequence RMRVVVNKEA…RAVKVRKGVE (76 aa).

The protein belongs to the archaeosine tRNA-ribosyltransferase family. As to quaternary structure, homodimer. Zn(2+) serves as cofactor.

It carries out the reaction guanosine(15) in tRNA + 7-cyano-7-deazaguanine = 7-cyano-7-carbaguanosine(15) in tRNA + guanine. Its pathway is tRNA modification; archaeosine-tRNA biosynthesis. Its function is as follows. Exchanges the guanine residue with 7-cyano-7-deazaguanine (preQ0) at position 15 in the dihydrouridine loop (D-loop) of archaeal tRNAs. The polypeptide is tRNA-guanine(15) transglycosylase (tgtA) (Pyrococcus horikoshii (strain ATCC 700860 / DSM 12428 / JCM 9974 / NBRC 100139 / OT-3)).